Here is a 419-residue protein sequence, read N- to C-terminus: L-rhamnose isomerase (419 aa).

Histidine 262, aspartate 294, and aspartate 296 together coordinate Mn(2+).

The protein belongs to the rhamnose isomerase family. As to quaternary structure, homotetramer. Mn(2+) serves as cofactor.

The protein localises to the cytoplasm. The enzyme catalyses L-rhamnopyranose = L-rhamnulose. It functions in the pathway carbohydrate degradation; L-rhamnose degradation; glycerone phosphate from L-rhamnose: step 1/3. Its function is as follows. Catalyzes the interconversion of L-rhamnose and L-rhamnulose. This chain is L-rhamnose isomerase, found in Escherichia coli O127:H6 (strain E2348/69 / EPEC).